The sequence spans 512 residues: Matrix metalloproteinase-27 (512 aa).

A signal peptide spans 1–17 (MKSFLLLFLLFVTFSSA). The propeptide at 18-98 (LPADQKMENE…PRCGVPDVGQ (81 aa)) is activation peptide. Positions 89–96 (PRCGVPDV) match the Cysteine switch motif. Cys91 is a Zn(2+) binding site. Asn110 carries an N-linked (GlcNAc...) asparagine glycan. Positions 121 and 155 each coordinate Ca(2+). Position 165 (His165) interacts with Zn(2+). Residues Asp173, Gly174, and Val178 each coordinate Ca(2+). His181 lines the Zn(2+) pocket. Ca(2+)-binding residues include Gly188 and Asp192. His194 provides a ligand contact to Zn(2+). Residues Asp196 and Glu199 each coordinate Ca(2+). His216 is a Zn(2+) binding site. Glu217 is a catalytic residue. Zn(2+) contacts are provided by His220 and His226. 4 Hemopexin repeats span residues 276-325 (PHAC…WPSL), 326-371 (PADL…GFPR), 373-421 (VKKI…FPGI), and 422-465 (GLRV…WFQC). Cysteines 279 and 465 form a disulfide. Asp286 contributes to the Ca(2+) binding site. The Ca(2+) site is built by Asp377 and Asp426. The tract at residues 466-512 (KEPLNSSLDFHFNQEKAYSGEVETLHHQSLSLLIFGIVHLLNKICSY) is required for retention in the endoplasmic reticulum.

This sequence belongs to the peptidase M10A family. It depends on Ca(2+) as a cofactor. The cofactor is Zn(2+). Post-translationally, N-glycosylated.

The protein localises to the endoplasmic reticulum. Matrix metalloproteinases degrade protein components of the extracellular matrix such as fibronectin, laminin, gelatins and/or collagens. This is Matrix metalloproteinase-27 (MMP27) from Tupaia belangeri (Common tree shrew).